Here is a 718-residue protein sequence, read N- to C-terminus: Glycine--tRNA ligase beta subunit (718 aa).

The protein belongs to the class-II aminoacyl-tRNA synthetase family. In terms of assembly, tetramer of two alpha and two beta subunits.

The protein localises to the cytoplasm. The enzyme catalyses tRNA(Gly) + glycine + ATP = glycyl-tRNA(Gly) + AMP + diphosphate. The protein is Glycine--tRNA ligase beta subunit of Mesorhizobium japonicum (strain LMG 29417 / CECT 9101 / MAFF 303099) (Mesorhizobium loti (strain MAFF 303099)).